Consider the following 172-residue polypeptide: Co-chaperone protein HscB homolog (172 aa).

One can recognise a J domain in the interval 2 to 69 (NHFELFNLPV…DSRAAYLLAL (68 aa)).

Belongs to the HscB family. In terms of assembly, interacts with HscA and stimulates its ATPase activity.

Functionally, co-chaperone involved in the maturation of iron-sulfur cluster-containing proteins. Seems to help targeting proteins to be folded toward HscA. The chain is Co-chaperone protein HscB homolog from Acinetobacter baumannii (strain AB307-0294).